A 65-amino-acid chain; its full sequence is Large ribosomal subunit protein bL35c (65 aa).

The interval 18–50 (SSGKILRHKASKSHLLQKKSSKHRRHLSSTCQV) is disordered. Basic residues predominate over residues 22 to 44 (ILRHKASKSHLLQKKSSKHRRHL).

Belongs to the bacterial ribosomal protein bL35 family.

The protein resides in the plastid. The protein localises to the chloroplast. The chain is Large ribosomal subunit protein bL35c from Porphyra purpurea (Red seaweed).